The chain runs to 552 residues: Protein psiB (552 aa).

Positions 1-18 (MKLLSVLITFLLATVIYS) are cleaved as a signal peptide. Asparagine 60 carries an N-linked (GlcNAc...) asparagine glycan. A PA14 domain is found at 114–255 (TYDTTRNIYV…EDYCGVCQGD (142 aa)). Residues asparagine 281, asparagine 313, asparagine 340, asparagine 365, asparagine 446, asparagine 472, and asparagine 521 are each glycosylated (N-linked (GlcNAc...) asparagine).

It belongs to the prespore-cell-inducing factor family.

The protein resides in the secreted. The chain is Protein psiB (psiB) from Dictyostelium discoideum (Social amoeba).